A 372-amino-acid polypeptide reads, in one-letter code: Putative aminopeptidase SgcX (372 aa).

Residues His-67 and Asp-180 each contribute to the a divalent metal cation site. Residue Glu-212 is the Proton acceptor of the active site. A divalent metal cation-binding residues include Glu-213, Asp-235, and His-329.

The protein belongs to the peptidase M42 family. A divalent metal cation serves as cofactor.

The sequence is that of Putative aminopeptidase SgcX (sgcX) from Salmonella typhimurium (strain LT2 / SGSC1412 / ATCC 700720).